The primary structure comprises 354 residues: MTVLKNDRYLKALLREPVDMTPVWMMRQAGRYLPEYKATRAKAGDFMSLCRNADLACEVTLQPLRRYDLDAAILFSDILTIPDAMGLGLSFGVGEGPKFARPIDNKSAVQNLPIPDPEQELQYVMNAVRTIRRELKGEVPLIGFSGSPWTLATYMVEGGSSKAFTKIKKMMYSEPKILHLLLDKLADAVILYLNAQINAGVQAVMVFDTWGGVLGHREYLDFSLQYMHKIVDGLIRENDGYKVPVTLFTKGGGLWLEAMASTGCDALGLDWTVNLAEAKARVGHKVALQGNMDPSVLYASPARIEQEVQQILADFGQGSGHVFNLGHGIHQDVPEISPKVFVDAVHQYSIFYHQ.

Substrate contacts are provided by residues 27–31, aspartate 77, tyrosine 154, threonine 209, and histidine 327; that span reads RQAGR.

The protein belongs to the uroporphyrinogen decarboxylase family. In terms of assembly, homodimer.

It is found in the cytoplasm. The catalysed reaction is uroporphyrinogen III + 4 H(+) = coproporphyrinogen III + 4 CO2. It participates in porphyrin-containing compound metabolism; protoporphyrin-IX biosynthesis; coproporphyrinogen-III from 5-aminolevulinate: step 4/4. In terms of biological role, catalyzes the decarboxylation of four acetate groups of uroporphyrinogen-III to yield coproporphyrinogen-III. The protein is Uroporphyrinogen decarboxylase of Histophilus somni (strain 2336) (Haemophilus somnus).